Here is an 85-residue protein sequence, read N- to C-terminus: MKVTLISILTCAAVLVLHTTAAEELEAESQLMEVGMPDTELAAVDEERLFECSVSCEIEKEGNKDCKKKKCKGGWKCKFNMCVKV.

Residues 1-22 (MKVTLISILTCAAVLVLHTTAA) form the signal peptide. A propeptide spanning residues 23-48 (EELEAESQLMEVGMPDTELAAVDEER) is cleaved from the precursor. 3 cysteine pairs are disulfide-bonded: cysteine 52–cysteine 66, cysteine 56–cysteine 77, and cysteine 71–cysteine 82.

It belongs to the neurotoxin 12 (Hwtx-2) family. 02 (Hwtx-2) subfamily. In terms of assembly, monomer. In terms of tissue distribution, expressed by the venom gland.

It localises to the secreted. Functionally, neurotoxin active on both insects and mammals. The sequence is that of U4-theraphotoxin-Hhn1a from Cyriopagopus hainanus (Chinese bird spider).